The following is a 116-amino-acid chain: Iron-sulfur cluster insertion protein ErpA (116 aa).

Iron-sulfur cluster-binding residues include cysteine 44, cysteine 108, and cysteine 110.

It belongs to the HesB/IscA family. Homodimer. Requires iron-sulfur cluster as cofactor.

Its function is as follows. Required for insertion of 4Fe-4S clusters for at least IspG. The sequence is that of Iron-sulfur cluster insertion protein ErpA from Aeromonas salmonicida (strain A449).